We begin with the raw amino-acid sequence, 389 residues long: Protein OSCP1 (389 aa).

As to expression, expressed predominantly in testis, also found in placenta and to a lesser extent in thymus and small intestine; abundantly expressed in tumor-derived cell lines. Ubiquitously expressed.

It localises to the basal cell membrane. Its function is as follows. May be involved in drug clearance in the placenta. The polypeptide is Protein OSCP1 (OSCP1) (Homo sapiens (Human)).